The chain runs to 400 residues: S-adenosylmethionine sensor upstream of mTORC1 (400 aa).

S-adenosyl-L-methionine contacts are provided by Arg-99, Gly-168, Asp-186, Asp-198, Phe-199, and Ser-240.

Belongs to the BMT2/SAMTOR family. As to quaternary structure, interacts with the GATOR1 complex; interaction is disrupted when samtor binds S-adenosyl-L-methionine. Interacts with the KICSTOR complex; interaction is disrupted when samtor binds S-adenosyl-L-methionine.

S-adenosyl-L-methionine-binding protein that acts as an inhibitor of mTORC1 signaling via interaction with the GATOR1 and KICSTOR complexes. Acts as a sensor of S-adenosyl-L-methionine to signal methionine sufficiency to mTORC1: in presence of methionine, binds S-adenosyl-L-methionine, leading to disrupt interaction with the GATOR1 and KICSTOR complexes and promote mTORC1 signaling. Upon methionine starvation, S-adenosyl-L-methionine levels are reduced, thereby promoting the association with GATOR1 and KICSTOR, leading to inhibit mTORC1 signaling. Probably also acts as a S-adenosyl-L-methionine-dependent methyltransferase. The protein is S-adenosylmethionine sensor upstream of mTORC1 of Xenopus laevis (African clawed frog).